Here is a 666-residue protein sequence, read N- to C-terminus: Peptidase S41 family protein phomP1 (666 aa).

A signal peptide spans Met1–Ser27. 3 N-linked (GlcNAc...) asparagine glycosylation sites follow: Asn70, Asn214, and Asn234. The segment at Asp303–Val504 is peptidase S41 domain. N-linked (GlcNAc...) asparagine glycans are attached at residues Asn555 and Asn612.

The protein belongs to the peptidase S41A family.

Its pathway is mycotoxin biosynthesis. Peptidase S41 family protein; part of the gene cluster that mediates the biosynthesis of the phomopsins, a group of hexapeptide mycotoxins which infects lupins and causes lupinosis disease in livestock. Within the pathway, phomP1 and phomP1' are probably involved in the processing of the phomA and phomA' precursors. The pathway starts with the processing of the precursor phomA by several endopeptidases including kexin proteases as well as the cluster-specific S41 family peptidase phomP1 and the oligopeptidase phomG to produce 10 identical copies of the hexapeptide Tyr-Val-Ile-Pro-Ile-Asp. After being excised from the precursor peptide, the core peptides are cyclized and modified post-translationally by enzymes encoded within the gene cluster. The timing and order of proteolysis of the phomA precursor and PTMs are still unknown. Two tyrosinase-like enzymes, phomQ1 and phomQ2, catalyze the chlorination and hydroxylation of Tyr, respectively. PhomYb, is proposed to be involved in the construction of the macrocyclic structure. The other 4 ustYa family proteins may be involved in PTMs that generate the unique structure of phomopsin A. PhomYa is required for the hydroxylation of C-beta of Tyr. PhomYc, phomYd, and phomYe are responsible for the biosynthesis of 2,3-dehydroisoleucine (dIle), 2,3-dehydroaspartic acid (dAsp), and 3,4-dehydroproline (dPro), respectively. While dIle formation by phomYc is indispensable for the installation of dAsp by phomYd, the order of the other PTMs have not been elucidated yet. Most of the biosynthetic enzymes likely have broad substrate specificity, and thus, there might be a metabolic grid from a precursor to phomopsin A. The enzyme(s) responsible for the biosynthesis of 3,4-dehydrovaline (dVal) have also not been identified yet. Finally, phomM acts as an S-adenosylmethionine-dependent alpha-N-methyltransferase that catalyzes two successive N-methylation reactions, converting N-desmethyl-phomopsin A to phomopsin A and phomopsin A further to an N,N-dimethylated congener called phomopsin E. The polypeptide is Peptidase S41 family protein phomP1 (Diaporthe leptostromiformis (Lupinosis disease fungus)).